The chain runs to 1412 residues: DNA-directed RNA polymerase subunit beta' (1412 aa).

Zn(2+)-binding residues include C70, C72, C85, and C88. Mg(2+) contacts are provided by D458, D460, and D462. The Zn(2+) site is built by C813, C887, C894, and C897. The interval 1388-1412 (EQALLTPATTAEAVVGEEPAPPPAQ) is disordered. Positions 1393-1405 (TPATTAEAVVGEE) are enriched in low complexity.

Belongs to the RNA polymerase beta' chain family. As to quaternary structure, the RNAP catalytic core consists of 2 alpha, 1 beta, 1 beta' and 1 omega subunit. When a sigma factor is associated with the core the holoenzyme is formed, which can initiate transcription. Mg(2+) is required as a cofactor. It depends on Zn(2+) as a cofactor.

The enzyme catalyses RNA(n) + a ribonucleoside 5'-triphosphate = RNA(n+1) + diphosphate. Functionally, DNA-dependent RNA polymerase catalyzes the transcription of DNA into RNA using the four ribonucleoside triphosphates as substrates. This is DNA-directed RNA polymerase subunit beta' from Methylibium petroleiphilum (strain ATCC BAA-1232 / LMG 22953 / PM1).